Reading from the N-terminus, the 33-residue chain is Cytochrome b6-f complex subunit 8 (33 aa).

A helical transmembrane segment spans residues 2–22 (LFTVAWASLAAMFSFSIAMVV).

Belongs to the PetN family. The 4 large subunits of the cytochrome b6-f complex are cytochrome b6, subunit IV (17 kDa polypeptide, PetD), cytochrome f and the Rieske protein, while the 4 small subunits are PetG, PetL, PetM and PetN. The complex functions as a dimer.

The protein resides in the cellular thylakoid membrane. Component of the cytochrome b6-f complex, which mediates electron transfer between photosystem II (PSII) and photosystem I (PSI), cyclic electron flow around PSI, and state transitions. The polypeptide is Cytochrome b6-f complex subunit 8 (Synechococcus sp. (strain CC9902)).